Consider the following 297-residue polypeptide: Mitochondrial citrate transporter A (297 aa).

Solcar repeat units follow at residues 12–91 (PSSL…LKSL), 102–188 (PKTV…LKQM), and 199–286 (LGTA…TMDA). 6 consecutive transmembrane segments (helical) span residues 18–31 (IIAG…EIAI), 61–81 (SQWY…AGIR), 99–119 (ISGP…SLLA), 160–180 (FFQG…TRFS), 192–212 (YVAP…GIAG), and 251–272 (KDEG…LIMS).

Belongs to the mitochondrial carrier (TC 2.A.29) family.

The protein localises to the mitochondrion inner membrane. It carries out the reaction citrate(in) + H(+)(in) = citrate(out) + H(+)(out). Mitochondrial transporter that mediates citrate export from mitochondria to cytoplasm. Both ctpA, ctpB, and ctpD play important roles in citric acid transport across the mitochondrial membrane and function in a redundant manner. The sequence is that of Mitochondrial citrate transporter A from Aspergillus niger (strain ATCC 1015 / CBS 113.46 / FGSC A1144 / LSHB Ac4 / NCTC 3858a / NRRL 328 / USDA 3528.7).